The chain runs to 148 residues: Large ribosomal subunit protein bL9 (148 aa).

This sequence belongs to the bacterial ribosomal protein bL9 family.

Binds to the 23S rRNA. The polypeptide is Large ribosomal subunit protein bL9 (Macrococcus caseolyticus (strain JCSC5402) (Macrococcoides caseolyticum)).